The chain runs to 422 residues: Metallocarboxypeptidase A (422 aa).

The signal sequence occupies residues 1–17 (MRSVLSFALLAANVVSA). The propeptide at 18–112 (AVLAPFDYSG…FEAYSAGYAP (95 aa)) is activation peptide. The 301-residue stretch at 119–419 (SYHSYQDHLS…AGTVAMLKAV (301 aa)) folds into the Peptidase M14 domain. Zn(2+)-binding residues include His-179 and Glu-182. Substrate-binding positions include 179 to 182 (HARE), Arg-237, and 254 to 255 (NR). Cys-248 and Cys-271 are oxidised to a cystine. His-309 is a Zn(2+) binding site. 310 to 311 (SY) lines the substrate pocket. Glu-385 (proton donor/acceptor) is an active-site residue.

Belongs to the peptidase M14 family. Zn(2+) serves as cofactor.

It localises to the secreted. Its function is as follows. Extracellular metalloprotease that contributes to pathogenicity. The protein is Metallocarboxypeptidase A (MCPA) of Arthroderma otae (strain ATCC MYA-4605 / CBS 113480) (Microsporum canis).